A 297-amino-acid chain; its full sequence is Ribosomal RNA small subunit methyltransferase H (297 aa).

S-adenosyl-L-methionine is bound by residues 34–36 (AGH), aspartate 54, phenylalanine 88, aspartate 106, and glutamine 113. Positions 272 to 297 (PLTAGEEETDRNPRARSAKLRAAEKK) are disordered.

This sequence belongs to the methyltransferase superfamily. RsmH family.

It is found in the cytoplasm. The enzyme catalyses cytidine(1402) in 16S rRNA + S-adenosyl-L-methionine = N(4)-methylcytidine(1402) in 16S rRNA + S-adenosyl-L-homocysteine + H(+). In terms of biological role, specifically methylates the N4 position of cytidine in position 1402 (C1402) of 16S rRNA. The polypeptide is Ribosomal RNA small subunit methyltransferase H (Acidobacterium capsulatum (strain ATCC 51196 / DSM 11244 / BCRC 80197 / JCM 7670 / NBRC 15755 / NCIMB 13165 / 161)).